The following is a 160-amino-acid chain: Transcription antitermination protein NusB (160 aa).

Belongs to the NusB family.

Functionally, involved in transcription antitermination. Required for transcription of ribosomal RNA (rRNA) genes. Binds specifically to the boxA antiterminator sequence of the ribosomal RNA (rrn) operons. This Rhizobium etli (strain CIAT 652) protein is Transcription antitermination protein NusB.